Here is a 429-residue protein sequence, read N- to C-terminus: Glycogenin-1 (429 aa).

UDP is bound by residues Leu8, Thr10, Asn11, Tyr14, and Arg76. Positions 8, 10, 11, 14, 76, 85, 101, 102, 103, 132, 133, 159, 162, and 163 each coordinate UDP-alpha-D-glucose. Residues Asp101, Ala102, and Asp103 each contribute to the UDP site. Residue Asp101 coordinates Mn(2+). Residue Asp103 participates in Mn(2+) binding. O-linked (Glc...) tyrosine glycosylation occurs at Tyr194. His211, Gly214, and Lys217 together coordinate UDP. His211 serves as a coordination point for Mn(2+). Positions 214 and 217 each coordinate UDP-alpha-D-glucose. Disordered regions lie at residues 254 to 274 (VFPS…HPKI) and 300 to 338 (SYDT…QTPH). 2 stretches are compositionally biased toward basic and acidic residues: residues 263 to 274 (EHRSHSADHPKI) and 309 to 338 (DSHR…QTPH).

Belongs to the glycosyltransferase 8 family. Glycogenin subfamily. As to quaternary structure, forms a heterooctamer with one molecule of gyg-1 bound to each protomer of the gys-1 homotetramer. The N-terminus of gys-1 is involved in interprotomer contacts with gyg-1. The interaction with gys-1 is required for glycogen production but is not required for gys-1 intrinsic activity. The cofactor is Mn(2+). In terms of processing, self-glycosylated by the transfer of glucose residues from UDP-glucose to itself, forming an alpha-1,4-glycan of around 10 residues attached to Tyr-194.

The protein resides in the cytoplasm. The protein localises to the nucleus. The enzyme catalyses L-tyrosyl-[glycogenin] + UDP-alpha-D-glucose = alpha-D-glucosyl-L-tyrosyl-[glycogenin] + UDP + H(+). It carries out the reaction [1,4-alpha-D-glucosyl](n)-L-tyrosyl-[glycogenin] + UDP-alpha-D-glucose = [1,4-alpha-D-glucosyl](n+1)-L-tyrosyl-[glycogenin] + UDP + H(+). The protein operates within glycan biosynthesis; glycogen biosynthesis. Its function is as follows. Self-glucosylating initiator of glycogen synthesis. It catalyzes the formation of a short alpha (1,4)-glucosyl chain covalently attached via a glucose 1-O-tyrosyl linkage to internal tyrosine residues and these chains act as primers for the elongation reaction catalyzed by glycogen synthase. The chain is Glycogenin-1 from Caenorhabditis elegans.